The following is a 119-amino-acid chain: Large ribosomal subunit protein bL20 (119 aa).

This sequence belongs to the bacterial ribosomal protein bL20 family.

Binds directly to 23S ribosomal RNA and is necessary for the in vitro assembly process of the 50S ribosomal subunit. It is not involved in the protein synthesizing functions of that subunit. The sequence is that of Large ribosomal subunit protein bL20 from Colwellia psychrerythraea (strain 34H / ATCC BAA-681) (Vibrio psychroerythus).